A 924-amino-acid polypeptide reads, in one-letter code: Autophagy-related protein 9B (924 aa).

Residues 1 to 144 form a disordered region; sequence MVSRMGWGGR…QDSPGLRVGP (144 aa). Over 1-207 the chain is Cytoplasmic; that stretch reads MVSRMGWGGR…KIYSYHQRNG (207 aa). Residues 17 to 27 are compositionally biased toward low complexity; it reads WGDLGPGSVPL. Positions 28-40 are enriched in pro residues; that stretch reads LPMPLPPPPPPSC. Positions 78-88 are enriched in polar residues; sequence LQGTGASQSCH. Positions 98 to 113 are enriched in low complexity; that stretch reads PTQAQPAMTPASASPS. The Tyrosine-based sorting signal signature appears at 151–154; the sequence is YERL. A helical membrane pass occupies residues 208–228; sequence FACILLEDVFQLGQFIFIVTF. Residues 229 to 276 lie on the Lumenal side of the membrane; sequence TTFLLRCVDYNVLFANQPSNHTRPGPFHSKVTLSDAILPSAQCAERIR. Residues 277 to 297 form a helical membrane-spanning segment; that stretch reads SSPLLVLLLVLAAGFWLVQLL. Residues 298 to 438 are Cytoplasmic-facing; that stretch reads RSVCNLFSYW…GALAARWGRT (141 aa). An intramembrane segment occupies 439–459; sequence VLLLAALNLALSPLVLAWQVL. The Cytoplasmic portion of the chain corresponds to 460–526; it reads HVFYSHVELL…AAPPAPLRTL (67 aa). Residues 527–547 form a helical membrane-spanning segment; it reads LARQLVFFAGALFAALLVLTV. The Lumenal segment spans residues 548 to 551; it reads YDED. A helical membrane pass occupies residues 552–572; the sequence is VLAVEHVLTAMTALGVTATVA. Over 573-624 the chain is Cytoplasmic; sequence RSFIPEEQCQGRAPQLLLQTALAHMHYLPEEPGPGGRDRAYRQMAQLLQYRA. Residues 625–645 lie within the membrane without spanning it; the sequence is VSLLEELLSPLLTPLFLLFWF. The Cytoplasmic portion of the chain corresponds to 646–924; sequence RPRALEIIDF…KEPDRASCTD (279 aa). The tract at residues 847 to 924 is disordered; it reads QQEPWGEAAA…KEPDRASCTD (78 aa). A compositionally biased stretch (low complexity) spans 878-890; sequence SWSSDGSSPASSP. A compositionally biased stretch (basic and acidic residues) spans 913–924; it reads TQKEPDRASCTD.

This sequence belongs to the ATG9 family. As to quaternary structure, homotrimer; forms a homotrimer with a central pore that forms a path between the two membrane leaflets. In terms of tissue distribution, highly expressed in placenta (trophoblast cells) and pituitary gland. Not expressed in vascular endothelial.

Its subcellular location is the preautophagosomal structure membrane. It carries out the reaction a 1,2-diacyl-sn-glycero-3-phosphocholine(in) = a 1,2-diacyl-sn-glycero-3-phosphocholine(out). It catalyses the reaction a 1,2-diacyl-sn-glycero-3-phospho-L-serine(in) = a 1,2-diacyl-sn-glycero-3-phospho-L-serine(out). The catalysed reaction is a 1,2-diacyl-sn-glycero-3-phosphoethanolamine(in) = a 1,2-diacyl-sn-glycero-3-phosphoethanolamine(out). In terms of biological role, phospholipid scramblase involved in autophagy by mediating autophagosomal membrane expansion. Cycles between the preautophagosomal structure/phagophore assembly site (PAS) and the cytoplasmic vesicle pool and supplies membrane for the growing autophagosome. Lipid scramblase activity plays a key role in preautophagosomal structure/phagophore assembly by distributing the phospholipids that arrive through ATG2 (ATG2A or ATG2B) from the cytoplasmic to the luminal leaflet of the bilayer, thereby driving autophagosomal membrane expansion. In addition to autophagy, also plays a role in necrotic cell death. The sequence is that of Autophagy-related protein 9B (ATG9B) from Homo sapiens (Human).